The following is a 373-amino-acid chain: Histone-lysine N-methyltransferase SETD7 (373 aa).

Residues Met1–Asp20 form a disordered region. 3 MORN repeats span residues Phe36–Thr58, Leu59–Ala81, and Phe106–Cys128. Residues Gln214 to Gly336 enclose the SET domain. S-adenosyl-L-methionine contacts are provided by residues Ala226 to Glu228, Asn296, and His297.

This sequence belongs to the class V-like SAM-binding methyltransferase superfamily. Histone-lysine methyltransferase family. SET7 subfamily.

The protein resides in the nucleus. It localises to the chromosome. It carries out the reaction L-lysyl(4)-[histone H3] + S-adenosyl-L-methionine = N(6)-methyl-L-lysyl(4)-[histone H3] + S-adenosyl-L-homocysteine + H(+). It catalyses the reaction L-lysyl-[protein] + S-adenosyl-L-methionine = N(6)-methyl-L-lysyl-[protein] + S-adenosyl-L-homocysteine + H(+). Functionally, histone methyltransferase that specifically monomethylates 'Lys-4' of histone H3. H3 'Lys-4' methylation represents a specific tag for epigenetic transcriptional activation. Plays a central role in the transcriptional activation of genes. Also has methyltransferase activity toward non-histone proteins. The sequence is that of Histone-lysine N-methyltransferase SETD7 (setd7) from Danio rerio (Zebrafish).